We begin with the raw amino-acid sequence, 399 residues long: Enolase (399 aa).

Glutamine 152 is a binding site for (2R)-2-phosphoglycerate. The active-site Proton donor is glutamate 194. Residues aspartate 230, glutamate 273, and aspartate 301 each coordinate Mg(2+). The (2R)-2-phosphoglycerate site is built by lysine 326, arginine 355, serine 356, and lysine 377. Residue lysine 326 is the Proton acceptor of the active site.

The protein belongs to the enolase family. Requires Mg(2+) as cofactor.

It is found in the cytoplasm. The protein localises to the secreted. It localises to the cell surface. The enzyme catalyses (2R)-2-phosphoglycerate = phosphoenolpyruvate + H2O. Its pathway is carbohydrate degradation; glycolysis; pyruvate from D-glyceraldehyde 3-phosphate: step 4/5. Functionally, catalyzes the reversible conversion of 2-phosphoglycerate (2-PG) into phosphoenolpyruvate (PEP). It is essential for the degradation of carbohydrates via glycolysis. The sequence is that of Enolase from Methanocorpusculum labreanum (strain ATCC 43576 / DSM 4855 / Z).